Consider the following 201-residue polypeptide: Adenylyl-sulfate kinase (201 aa).

35 to 42 (GLSGSGKS) is an ATP binding site. Residue Ser109 is the Phosphoserine intermediate of the active site.

This sequence belongs to the APS kinase family.

It carries out the reaction adenosine 5'-phosphosulfate + ATP = 3'-phosphoadenylyl sulfate + ADP + H(+). It functions in the pathway sulfur metabolism; hydrogen sulfide biosynthesis; sulfite from sulfate: step 2/3. Catalyzes the synthesis of activated sulfate. This is Adenylyl-sulfate kinase from Salmonella paratyphi A (strain AKU_12601).